The chain runs to 467 residues: Indoleacetamide hydrolase (467 aa).

Active-site charge relay system residues include lysine 74 and serine 149. Serine 173 serves as the catalytic Acyl-ester intermediate.

This sequence belongs to the amidase family.

Its pathway is plant hormone metabolism; auxin biosynthesis. Functionally, hydrolyzes indole-3-acetamide (IAM) into indole-3-acetic acid (IAA). The sequence is that of Indoleacetamide hydrolase (tms2) from Rhizobium radiobacter (Agrobacterium tumefaciens).